We begin with the raw amino-acid sequence, 374 residues long: Histidinol-phosphate aminotransferase 1 (374 aa).

Lys-232 carries the N6-(pyridoxal phosphate)lysine modification.

Belongs to the class-II pyridoxal-phosphate-dependent aminotransferase family. Histidinol-phosphate aminotransferase subfamily. In terms of assembly, homodimer. Pyridoxal 5'-phosphate serves as cofactor.

It catalyses the reaction L-histidinol phosphate + 2-oxoglutarate = 3-(imidazol-4-yl)-2-oxopropyl phosphate + L-glutamate. It participates in amino-acid biosynthesis; L-histidine biosynthesis; L-histidine from 5-phospho-alpha-D-ribose 1-diphosphate: step 7/9. This chain is Histidinol-phosphate aminotransferase 1 (hisC1), found in Ralstonia nicotianae (strain ATCC BAA-1114 / GMI1000) (Ralstonia solanacearum).